We begin with the raw amino-acid sequence, 368 residues long: uncharacterized protein (368 aa).

A Response regulatory domain is found at 3 to 120 (KILLADDERI…QIISSLEEII (118 aa)). 4-aspartylphosphate is present on D55. In terms of domain architecture, HTH araC/xylS-type spans 259–361 (SKMIRLIADE…GLTPSEFRRK (103 aa)). 2 consecutive DNA-binding regions (H-T-H motif) follow at residues 278-299 (WAAK…KQET) and 327-351 (VSEI…KKYT).

Post-translationally, phosphorylated by YesM.

Its subcellular location is the cytoplasm. Functionally, member of the two-component regulatory system YesM/YesN. This is an uncharacterized protein from Bacillus subtilis (strain 168).